The sequence spans 769 residues: Integrin beta-2 (769 aa).

The N-terminal stretch at 1 to 22 (MLRQRPQLLLLAGLLALQSVLS) is a signal peptide. Glutamine 23 carries the post-translational modification Pyrrolidone carboxylic acid. Over 23–700 (QECTNYKVST…DMLECVKGPN (678 aa)) the chain is Extracellular. One can recognise a PSI domain in the interval 24–74 (ECTNYKVSTCRDCIESGPGCAWCQKLNFTGQGEPDSIRCDTRAELLSKGCP). Disulfide bonds link cysteine 25–cysteine 43, cysteine 33–cysteine 447, cysteine 36–cysteine 62, cysteine 46–cysteine 73, cysteine 191–cysteine 198, cysteine 246–cysteine 286, cysteine 386–cysteine 400, cysteine 420–cysteine 445, cysteine 449–cysteine 467, cysteine 459–cysteine 470, cysteine 472–cysteine 481, cysteine 483–cysteine 514, cysteine 497–cysteine 512, cysteine 506–cysteine 517, cysteine 519–cysteine 534, cysteine 536–cysteine 559, cysteine 541–cysteine 557, cysteine 549–cysteine 562, cysteine 564–cysteine 573, cysteine 575–cysteine 598, cysteine 582–cysteine 596, cysteine 590–cysteine 601, cysteine 603–cysteine 612, cysteine 615–cysteine 618, cysteine 622–cysteine 662, cysteine 628–cysteine 647, cysteine 631–cysteine 643, and cysteine 670–cysteine 695. N-linked (GlcNAc...) asparagine glycosylation is found at asparagine 50 and asparagine 116. The region spanning 124-363 (GYPIDLYYLM…ELIKNAYNKL (240 aa)) is the VWFA domain. Positions 136 and 138 each coordinate Mg(2+). Ca(2+) is bound by residues serine 138, aspartate 141, aspartate 142, and aspartate 173. Ca(2+) contacts are provided by asparagine 229, aspartate 231, proline 233, and glutamate 234. Glutamate 234 provides a ligand contact to Mg(2+). Asparagine 254 carries an N-linked (GlcNAc...) asparagine glycan. Ca(2+) is bound by residues aspartate 264 and glutamate 347. The short motif at 397–399 (RGD) is the Cell attachment site element. 4 consecutive I-EGF domains span residues 449–482 (CRDA…KNCE), 483–535 (CQTQ…QFCE), 536–574 (CDNV…SACQ), and 575–613 (CLKS…PLCS). A glycan (N-linked (GlcNAc...) asparagine) is linked at asparagine 501. Asparagine 642 is a glycosylation site (N-linked (GlcNAc...) asparagine). Residues 701 to 723 (IAAIVGGTVGGVVLVGILLLVIW) traverse the membrane as a helical segment. Residues 724–769 (KALTHLSDLREYHRFEKEKLKSQWNNDNPLFKSATTTVMNPKFAES) are Cytoplasmic-facing. Residues serine 745 and serine 756 each carry the phosphoserine modification. Threonine 758 and threonine 760 each carry phosphothreonine.

The protein belongs to the integrin beta chain family. Heterodimer of an alpha and a beta subunit. The ITGB2 beta subunit associates with the ITGAL, ITGAM, ITGAX or ITGAD alpha subunits. Found in a complex with CD177 and ITGAM/CD11b. Interacts with FGR. Interacts with COPS5 and RANBP9. Interacts with FLNA (via filamin repeats 4, 9, 12, 17, 19, 21, and 23). Interacts with THBD. Both Ser-745 and Ser-756 become phosphorylated when T-cells are exposed to phorbol esters. Phosphorylation on Thr-758 (but not on Ser-756) allows interaction with 14-3-3 proteins.

The protein localises to the cell membrane. It is found in the membrane raft. Functionally, integrin ITGAL/ITGB2 is a receptor for ICAM1, ICAM2, ICAM3 and ICAM4. Integrin ITGAL/ITGB2 is also a receptor for the secreted form of ubiquitin-like protein ISG15; the interaction is mediated by ITGAL. Integrins ITGAM/ITGB2 and ITGAX/ITGB2 are receptors for the iC3b fragment of the third complement component and for fibrinogen. Integrin ITGAX/ITGB2 recognizes the sequence G-P-R in fibrinogen alpha-chain. Integrin ITGAM/ITGB2 recognizes P1 and P2 peptides of fibrinogen gamma chain. Integrin ITGAM/ITGB2 is also a receptor for factor X. Integrin ITGAD/ITGB2 is a receptor for ICAM3 and VCAM1. Contributes to natural killer cell cytotoxicity. Involved in leukocyte adhesion and transmigration of leukocytes including T-cells and neutrophils. Triggers neutrophil transmigration during lung injury through PTK2B/PYK2-mediated activation. Integrin ITGAL/ITGB2 in association with ICAM3, contributes to apoptotic neutrophil phagocytosis by macrophages. This is Integrin beta-2 (ITGB2) from Bos taurus (Bovine).